Consider the following 462-residue polypeptide: Centrosomal protein of 55 kDa (462 aa).

A compositionally biased stretch (basic and acidic residues) spans 1–11 (MSSRSPKDLIK). A disordered region spans residues 1-25 (MSSRSPKDLIKSKWGSRPSSSKSDT). Over residues 12–23 (SKWGSRPSSSKS) the composition is skewed to low complexity. Coiled-coil stretches lie at residues 50 to 185 (KVAN…QQWL) and 228 to 400 (YLQE…KQLH). Residues serine 96 and serine 99 each carry the phosphoserine modification. The interaction with TSG101 stretch occupies residues 157–235 (ANCFNSSMNS…EGYLQEEKQK (79 aa)). The interval 160-214 (FNSSMNSIHEKEMQLKDALEKNQQWLVYDQQREAYVKGLLAKIFELEKRTETAAA) is interaction with PDCD6IP. Residues 354–462 (QMQACTLDFE…LLVHVEYCMK (109 aa)) are required for localization to the interphase centrosome and to the midbody during cytokinesis. Phosphoserine is present on residues serine 423 and serine 426. Threonine 428 carries the post-translational modification Phosphothreonine. Serine 434 is modified (phosphoserine; by PLK1).

As to quaternary structure, homodimer. Interacts (phosphorylated on Ser-423 and Ser-426) with PLK1; the interaction is indirect via the MTMR3:MTMR4 heterooligomer, occurs during early mitosis, regulates the phosphorylation of CEP55 by PLK1 and its recruitment to the midbody where it can mediate cell abscission. Interacts with AKAP9/CG-NAP; the interaction occurs in interphase and is lost upon mitotic entry. Interacts with PCNT/Kendrin; the interaction occurs in interphase and is lost upon mitotic entry. Directly interacts with PDCD6IP; this interaction is required for PDCD6IP targeting to the midbody; CEP55 binds PDCD6IP in a 2:1 stoichiometry; PDCD6IP competes with TSG101 for the same binding site. Interacts with TSG101; TSG101 competes with PDCD6IP for the same binding site; interaction is required for cytokinesis. Interacts with MVB12A, VPS37B, VPS37C and VPS28. Post-translationally, there is a hierachy of phosphorylation, where both Ser-423 and Ser-426 are phosphorylated at the onset of mitosis, prior to Ser-434. Phosphorylation at Ser-423 and Ser-426 is required for dissociation from the centrosome at the G2/M boundary. Phosphorylation at the 3 sites, Ser-423, Ser-426 and Ser-434, is required for protein function at the final stages of cell division to complete cytokinesis successfully.

The protein resides in the cytoplasm. The protein localises to the cytoskeleton. It localises to the microtubule organizing center. It is found in the centrosome. Its subcellular location is the centriole. The protein resides in the cleavage furrow. The protein localises to the midbody. It localises to the midbody ring. In terms of biological role, plays a role in mitotic exit and cytokinesis. Recruits PDCD6IP and TSG101 to midbody during cytokinesis. Required for successful completion of cytokinesis. Not required for microtubule nucleation. Plays a role in the development of the brain and kidney. The protein is Centrosomal protein of 55 kDa of Rattus norvegicus (Rat).